Consider the following 713-residue polypeptide: Polyphosphate kinase (713 aa).

Asparagine 63 is a binding site for ATP. Mg(2+)-binding residues include arginine 394 and arginine 424. Histidine 454 (phosphohistidine intermediate) is an active-site residue. ATP-binding residues include tyrosine 487, arginine 583, and histidine 611.

Belongs to the polyphosphate kinase 1 (PPK1) family. Mg(2+) is required as a cofactor. An intermediate of this reaction is the autophosphorylated ppk in which a phosphate is covalently linked to a histidine residue through a N-P bond.

It carries out the reaction [phosphate](n) + ATP = [phosphate](n+1) + ADP. Catalyzes the reversible transfer of the terminal phosphate of ATP to form a long-chain polyphosphate (polyP). This Prosthecochloris aestuarii (strain DSM 271 / SK 413) protein is Polyphosphate kinase.